A 606-amino-acid chain; its full sequence is Transmembrane 9 superfamily member 1 (606 aa).

The N-terminal stretch at 1–27 (MTVLGHPRSWSCRWWPLLLLLLLTGRE) is a signal peptide. Asn178 is a glycosylation site (N-linked (GlcNAc...) asparagine). A run of 4 helical transmembrane segments spans residues 237–257 (LSII…AVIL), 310–330 (VLGV…MALL), 339–359 (GAIN…SGYV), and 373–393 (VWNI…TWSV). Residue Asn401 is glycosylated (N-linked (GlcNAc...) asparagine). 4 consecutive transmembrane segments (helical) span residues 412 to 432 (ILLL…IGGI), 469 to 489 (VGGF…FATV), 499 to 519 (GILF…SIAL), and 535 to 555 (SVLS…FYYA). N-linked (GlcNAc...) asparagine glycosylation is present at Asn559. A helical transmembrane segment spans residues 570–590 (FGYSLLTGYVFFLMLGTISFF).

It belongs to the nonaspanin (TM9SF) (TC 9.A.2) family.

The protein localises to the lysosome membrane. It is found in the cytoplasmic vesicle. The protein resides in the autophagosome membrane. In terms of biological role, plays an essential role in autophagy. The chain is Transmembrane 9 superfamily member 1 (TM9SF1) from Bos taurus (Bovine).